Reading from the N-terminus, the 942-residue chain is Mitogen-activated protein kinase kinase kinase A (942 aa).

The PB1 domain occupies 15–96; that stretch reads FIRIKCILGD…NPTKIISTKF (82 aa). The disordered stretch occupies residues 107–144; it reads PLSSSLSPTQSLILNNNNNNNNNNNNNNNNNNNNNNNN. In terms of domain architecture, Protein kinase spans 170-429; that stretch reads WQKGQILGRG…ANQLLKHPFI (260 aa). ATP is bound by residues 176 to 184 and Lys199; that span reads LGRGGYGSV. The active-site Proton acceptor is Asp297. Low complexity predominate over residues 441-486; sequence ISPTTTLSTNTTNTTATTTTTNNATNSNINQQQQQQQQQPPTRTQR. Positions 441 to 512 are disordered; the sequence is ISPTTTLSTN…ISTSTSSSSS (72 aa). The span at 487–498 shows a compositional bias: polar residues; the sequence is VSISAGSSNNKR. A compositionally biased stretch (low complexity) spans 500-512; the sequence is TPPISTSTSSSSS. The chain crosses the membrane as a helical span at residues 513–533; it reads SILNNFSINIILPINLIILIF. The F-box domain occupies 518–564; sequence FSINIILPINLIILIFREIKPNFVNTLSRVCKHWKQIIDDDELWNKY. WD repeat units lie at residues 607–646, 690–733, 736–778, 780–825, 828–865, 872–909, and 912–942; these read GHDK…HHNH, GHSG…TLFT, NHQE…STLR, HTGG…KVRS, QHTE…TIST, RQKN…DSRS, and GHHE…WSID.

Belongs to the protein kinase superfamily. STE Ser/Thr protein kinase family. MAP kinase kinase kinase subfamily. In terms of assembly, interacts with ubcB and ubpB. Mg(2+) serves as cofactor. UbcB and ubpB differentially control ubiquitination/deubiquitination and degradation in a cell-type-specific and temporally regulated manner.

The protein resides in the membrane. It carries out the reaction L-seryl-[protein] + ATP = O-phospho-L-seryl-[protein] + ADP + H(+). The enzyme catalyses L-threonyl-[protein] + ATP = O-phospho-L-threonyl-[protein] + ADP + H(+). Regulates cell-type differentiation and spatial patterning, required for the proper induction and maintenance of prespore cell differentiation. This chain is Mitogen-activated protein kinase kinase kinase A, found in Dictyostelium discoideum (Social amoeba).